We begin with the raw amino-acid sequence, 1011 residues long: Lysosomal alpha-mannosidase (1011 aa).

A signal peptide spans 1–49 (MGAYARASGVCARGCLDSAGPWTMSRALRPPLPPLCFFLLLLAAAGARA). Intrachain disulfides connect Cys-55–Cys-358 and Cys-268–Cys-273. 2 residues coordinate Zn(2+): His-72 and Asp-74. An N-linked (GlcNAc...) asparagine glycan is attached at Asn-133. Residue Asp-196 participates in Zn(2+) binding. Asp-196 functions as the Nucleophile in the catalytic mechanism. N-linked (GlcNAc...) asparagine glycans are attached at residues Asn-310 and Asn-367. 2 disulfides stabilise this stretch: Cys-412/Cys-472 and Cys-493/Cys-501. Position 446 (His-446) interacts with Zn(2+). Asn-497, Asn-645, Asn-651, Asn-692, Asn-766, Asn-832, Asn-930, and Asn-989 each carry an N-linked (GlcNAc...) asparagine glycan.

The protein belongs to the glycosyl hydrolase 38 family. Requires Zn(2+) as cofactor. In terms of processing, first processed into 3 peptides of 70 kDa, 42 kDa (D) and 13/15 kDa (E). The 70 kDa peptide is further processed into three peptides (A, B and C). The A, B and C peptides are disulfide-linked. Post-translationally, heavily glycosylated.

The protein localises to the lysosome. It catalyses the reaction Hydrolysis of terminal, non-reducing alpha-D-mannose residues in alpha-D-mannosides.. In terms of biological role, necessary for the catabolism of N-linked carbohydrates released during glycoprotein turnover. Cleaves all known types of alpha-mannosidic linkages. This Homo sapiens (Human) protein is Lysosomal alpha-mannosidase (MAN2B1).